The chain runs to 216 residues: Octanoyltransferase (216 aa).

Residues Glu34–His209 enclose the BPL/LPL catalytic domain. Residues Arg73 to His80, Ser140 to Gly142, and Gly153 to Ala155 contribute to the substrate site. Cys171 acts as the Acyl-thioester intermediate in catalysis.

It belongs to the LipB family.

It localises to the cytoplasm. The catalysed reaction is octanoyl-[ACP] + L-lysyl-[protein] = N(6)-octanoyl-L-lysyl-[protein] + holo-[ACP] + H(+). Its pathway is protein modification; protein lipoylation via endogenous pathway; protein N(6)-(lipoyl)lysine from octanoyl-[acyl-carrier-protein]: step 1/2. Its function is as follows. Catalyzes the transfer of endogenously produced octanoic acid from octanoyl-acyl-carrier-protein onto the lipoyl domains of lipoate-dependent enzymes. Lipoyl-ACP can also act as a substrate although octanoyl-ACP is likely to be the physiological substrate. The chain is Octanoyltransferase from Psychromonas ingrahamii (strain DSM 17664 / CCUG 51855 / 37).